We begin with the raw amino-acid sequence, 827 residues long: Beta-galactosidase 2 (827 aa).

The N-terminal stretch at 1–24 (MAASAVAVAFVVAVAAVLAAAASA) is a signal peptide. The active-site Proton donor is the glutamate 182. An N-linked (GlcNAc...) asparagine glycan is attached at asparagine 209. Glutamate 251 functions as the Nucleophile in the catalytic mechanism. Asparagine 458 carries N-linked (GlcNAc...) asparagine glycosylation. The 87-residue stretch at 741–827 (DYEKAKVHLQ…KRAVVEAICG (87 aa)) folds into the SUEL-type lectin domain.

Belongs to the glycosyl hydrolase 35 family.

It localises to the secreted. It is found in the extracellular space. The protein resides in the apoplast. It carries out the reaction Hydrolysis of terminal non-reducing beta-D-galactose residues in beta-D-galactosides.. The protein is Beta-galactosidase 2 of Oryza sativa subsp. japonica (Rice).